Reading from the N-terminus, the 115-residue chain is Large ribosomal subunit protein bL20 (115 aa).

Belongs to the bacterial ribosomal protein bL20 family.

Functionally, binds directly to 23S ribosomal RNA and is necessary for the in vitro assembly process of the 50S ribosomal subunit. It is not involved in the protein synthesizing functions of that subunit. The sequence is that of Large ribosomal subunit protein bL20 from Chlorobium phaeobacteroides (strain BS1).